The following is a 252-amino-acid chain: Nuclease C1 (252 aa).

His-87 serves as the catalytic Proton acceptor. Asn-119 lines the Mg(2+) pocket.

The protein belongs to the DNA/RNA non-specific endonuclease family. Requires Mg(2+) as cofactor. Mn(2+) serves as cofactor.

It localises to the secreted. This enzyme has both RNase and DNase activity. The chain is Nuclease C1 (NUC1CE) from Cunninghamella echinulata var. echinulata.